Reading from the N-terminus, the 127-residue chain is Major sperm protein isoform alpha (127 aa).

Alanine 2 carries the post-translational modification N-acetylalanine. The 118-residue stretch at 9 to 126 (DINTQPSQKI…RRKNLPIEYN (118 aa)) folds into the MSP domain.

As to quaternary structure, forms filaments 10 nm wide, with a characteristic substructure repeating axially at 9 nm. In terms of tissue distribution, sperm.

The protein resides in the cell projection. It localises to the pseudopodium. The protein localises to the cytoplasm. Its subcellular location is the cytoskeleton. Functionally, central component in molecular interactions underlying sperm crawling. Forms an extensive filament system that extends from sperm villipoda, along the leading edge of the pseudopod. This is Major sperm protein isoform alpha from Ascaris suum (Pig roundworm).